We begin with the raw amino-acid sequence, 273 residues long: Ribosomal RNA small subunit methyltransferase A (273 aa).

Residues asparagine 18, leucine 20, glycine 45, glutamate 66, aspartate 91, and asparagine 113 each coordinate S-adenosyl-L-methionine.

This sequence belongs to the class I-like SAM-binding methyltransferase superfamily. rRNA adenine N(6)-methyltransferase family. RsmA subfamily.

It is found in the cytoplasm. The catalysed reaction is adenosine(1518)/adenosine(1519) in 16S rRNA + 4 S-adenosyl-L-methionine = N(6)-dimethyladenosine(1518)/N(6)-dimethyladenosine(1519) in 16S rRNA + 4 S-adenosyl-L-homocysteine + 4 H(+). Specifically dimethylates two adjacent adenosines (A1518 and A1519) in the loop of a conserved hairpin near the 3'-end of 16S rRNA in the 30S particle. May play a critical role in biogenesis of 30S subunits. The protein is Ribosomal RNA small subunit methyltransferase A of Salmonella choleraesuis (strain SC-B67).